The primary structure comprises 137 residues: Probable 4-amino-4-deoxy-L-arabinose-phosphoundecaprenol flippase subunit ArnF (137 aa).

The Cytoplasmic segment spans residues 1 to 3 (MNA). A helical transmembrane segment spans residues 4–24 (LRGWLAALGSMLLASAAQLGM). Residues 25-44 (RWGMSRLPLPEAWAGQTPER) lie on the Periplasmic side of the membrane. A helical transmembrane segment spans residues 45–65 (AALLAVALAVAAYAASLLCWL). Topologically, residues 66 to 76 (AALRHLPLGRA) are cytoplasmic. The chain crosses the membrane as a helical span at residues 77 to 97 (YSLLSASYALVYLLAASLPAF). Residues 98–100 (DET) are Periplasmic-facing. A helical transmembrane segment spans residues 101–121 (FSTSKILGVGLVVLGVLTVNA). Topologically, residues 122 to 137 (RRTAAAPAHHPSRKAP) are cytoplasmic.

It belongs to the ArnF family. In terms of assembly, heterodimer of ArnE and ArnF.

It is found in the cell inner membrane. It participates in bacterial outer membrane biogenesis; lipopolysaccharide biosynthesis. Its function is as follows. Translocates 4-amino-4-deoxy-L-arabinose-phosphoundecaprenol (alpha-L-Ara4N-phosphoundecaprenol) from the cytoplasmic to the periplasmic side of the inner membrane. This is Probable 4-amino-4-deoxy-L-arabinose-phosphoundecaprenol flippase subunit ArnF from Pseudomonas aeruginosa (strain LESB58).